Reading from the N-terminus, the 87-residue chain is Diazepam-binding inhibitor-like 5 (87 aa).

Residues 2–87 form the ACB domain; sequence SQVEFEMACA…VEELKKKEPC (86 aa). An acyl-CoA-binding positions include 29–33, K55, and Y74; that span reads YSFYK.

Belongs to the ACBP family. Exclusively expressed in late spermatids and spermatozoa. Not found in epididymis, spleen, bone marrow, skin, liver, brain, heart, kidney, muscle.

It localises to the cytoplasm. Functionally, may be involved in the energy metabolism of the mature sperm. The protein is Diazepam-binding inhibitor-like 5 (Dbil5) of Mus musculus (Mouse).